Consider the following 201-residue polypeptide: Ribosome maturation factor RimP (201 aa).

This sequence belongs to the RimP family.

Its subcellular location is the cytoplasm. Required for maturation of 30S ribosomal subunits. In Rhizobium leguminosarum bv. trifolii (strain WSM2304), this protein is Ribosome maturation factor RimP.